Here is a 293-residue protein sequence, read N- to C-terminus: Membrane protein RL13 (293 aa).

A signal peptide spans 1–19 (MHWHLAITWTVIILTFSEC). Residues 245–265 (IPLGIHAVWAGIVVSVALIAL) form a helical membrane-spanning segment.

Its subcellular location is the virion membrane. In terms of biological role, may play a role in modifying tropism or in modulating cell signaling during virus entry. Since RL13 expression severely impairs HCMV replication in epithelial cell cultures, it may act as a regulator promoting persistence by suppressing the switch to fully lytic infection. The protein is Membrane protein RL13 (RL13) of Human cytomegalovirus (strain Merlin) (HHV-5).